Consider the following 227-residue polypeptide: Endo-1,4-beta-xylanase 1 (227 aa).

Positions 1–19 are cleaved as a signal peptide; the sequence is MVSLKSVLAAATAVSSAIA. The GH11 domain occupies 37–225; the sequence is QVTPNAEGWH…SSGESDIYVQ (189 aa). Glutamate 121 functions as the Nucleophile in the catalytic mechanism. The active-site Proton donor is glutamate 212.

Belongs to the glycosyl hydrolase 11 (cellulase G) family.

The enzyme catalyses Endohydrolysis of (1-&gt;4)-beta-D-xylosidic linkages in xylans.. The protein operates within glycan degradation; xylan degradation. The protein is Endo-1,4-beta-xylanase 1 of Humicola insolens (Soft-rot fungus).